We begin with the raw amino-acid sequence, 969 residues long: Protein translocase subunit SecA (969 aa).

ATP is bound by residues Gln-99, 117–121, and Asp-631; that span reads GEGKT.

This sequence belongs to the SecA family. As to quaternary structure, monomer and homodimer. Part of the essential Sec protein translocation apparatus which comprises SecA, SecYEG and auxiliary proteins SecDF. Other proteins may also be involved.

It localises to the cell inner membrane. Its subcellular location is the cytoplasm. It carries out the reaction ATP + H2O + cellular proteinSide 1 = ADP + phosphate + cellular proteinSide 2.. Functionally, part of the Sec protein translocase complex. Interacts with the SecYEG preprotein conducting channel. Has a central role in coupling the hydrolysis of ATP to the transfer of proteins into and across the cell membrane, serving as an ATP-driven molecular motor driving the stepwise translocation of polypeptide chains across the membrane. The chain is Protein translocase subunit SecA from Chlamydia trachomatis serovar A (strain ATCC VR-571B / DSM 19440 / HAR-13).